We begin with the raw amino-acid sequence, 143 residues long: Transcription antitermination protein NusB (143 aa).

The protein belongs to the NusB family.

Functionally, involved in transcription antitermination. Required for transcription of ribosomal RNA (rRNA) genes. Binds specifically to the boxA antiterminator sequence of the ribosomal RNA (rrn) operons. The protein is Transcription antitermination protein NusB of Buchnera aphidicola subsp. Acyrthosiphon pisum (strain 5A).